The primary structure comprises 272 residues: Regulatory protein RecX (272 aa).

It belongs to the RecX family.

It localises to the cytoplasm. Modulates RecA activity. The sequence is that of Regulatory protein RecX from Staphylococcus aureus (strain Newman).